A 333-amino-acid chain; its full sequence is Flap endonuclease 1 (333 aa).

The segment at 1-99 (MGVAIRDILA…ETINERREHR (99 aa)) is N-domain. Mg(2+)-binding residues include Asp-28, Asp-81, Glu-153, Glu-155, Asp-174, Asp-176, and Asp-235. The interval 117–255 (EAYKQASASA…KTALKIVRNG (139 aa)) is I-domain. The tract at residues 325-333 (TQKTLDAWF) is interaction with PCNA.

This sequence belongs to the XPG/RAD2 endonuclease family. FEN1 subfamily. In terms of assembly, interacts with PCNA. PCNA stimulates the nuclease activity without altering cleavage specificity. The cofactor is Mg(2+).

Structure-specific nuclease with 5'-flap endonuclease and 5'-3' exonuclease activities involved in DNA replication and repair. During DNA replication, cleaves the 5'-overhanging flap structure that is generated by displacement synthesis when DNA polymerase encounters the 5'-end of a downstream Okazaki fragment. Binds the unpaired 3'-DNA end and kinks the DNA to facilitate 5' cleavage specificity. Cleaves one nucleotide into the double-stranded DNA from the junction in flap DNA, leaving a nick for ligation. Also involved in the base excision repair (BER) pathway. Acts as a genome stabilization factor that prevents flaps from equilibrating into structures that lead to duplications and deletions. Also possesses 5'-3' exonuclease activity on nicked or gapped double-stranded DNA. This chain is Flap endonuclease 1, found in Methanoculleus marisnigri (strain ATCC 35101 / DSM 1498 / JR1).